The chain runs to 225 residues: PKHD-type hydroxylase YbiX (225 aa).

One can recognise a Fe2OG dioxygenase domain in the interval 78–177 (TLSTPLFNRY…RVASFMWIQS (100 aa)). Fe cation is bound by residues histidine 96, aspartate 98, and histidine 158. Arginine 168 contributes to the 2-oxoglutarate binding site.

Fe(2+) is required as a cofactor. L-ascorbate serves as cofactor.

The sequence is that of PKHD-type hydroxylase YbiX from Shigella dysenteriae serotype 1 (strain Sd197).